Consider the following 372-residue polypeptide: Chemerin-like receptor 1 (372 aa).

Residues methionine 1 to valine 39 are Extracellular-facing. An N-linked (GlcNAc...) asparagine glycan is attached at asparagine 7. The helical transmembrane segment at phenylalanine 40–isoleucine 62 threads the bilayer. At alanine 63–threonine 73 the chain is on the cytoplasmic side. Residues valine 74–threonine 95 form a helical membrane-spanning segment. Over tyrosine 96–isoleucine 112 the chain is Extracellular. The cysteines at positions 110 and 188 are disulfide-linked. The helical transmembrane segment at serine 113–phenylalanine 133 threads the bilayer. Over aspartate 134–arginine 152 the chain is Cytoplasmic. Residues leucine 153–valine 174 traverse the membrane as a helical segment. The Extracellular segment spans residues phenylalanine 175–arginine 223. N-linked (GlcNAc...) asparagine glycosylation occurs at asparagine 191. A helical membrane pass occupies residues phenylalanine 224–phenylalanine 244. The Cytoplasmic segment spans residues lysine 245 to isoleucine 260. Residues isoleucine 261–leucine 281 traverse the membrane as a helical segment. At glutamate 282–leucine 299 the chain is on the extracellular side. A helical membrane pass occupies residues alanine 300 to glycine 319. The Cytoplasmic portion of the chain corresponds to histidine 320–leucine 372. Phosphoserine is present on serine 338. Residue threonine 341 is modified to Phosphothreonine. Phosphoserine is present on residues serine 348, serine 351, and serine 357. Threonine 371 carries the phosphothreonine modification.

It belongs to the chemokine-like receptor (CMKLR) family. High expression in heart and lung, low in small intestines, colon, kidney, liver, uterus and brain.

The protein resides in the cell membrane. Its function is as follows. Receptor for the chemoattractant adipokine chemerin/RARRES2 and for the omega-3 fatty acid derived molecule resolvin E1. Interaction with RARRES2 initiates activation of G proteins G(i)/G(o) and beta-arrestin pathways inducing cellular responses via second messenger pathways such as intracellular calcium mobilization, phosphorylation of MAP kinases MAPK1/MAPK3 (ERK1/2), TYRO3, MAPK14/P38MAPK and PI3K leading to multifunctional effects, like, reduction of immune responses, enhancing of adipogenesis and angionesis. Resolvin E1 down-regulates cytokine production in macrophages by reducing the activation of MAPK1/3 (ERK1/2) and NF-kappa-B. Positively regulates adipogenesis and adipocyte metabolism. The sequence is that of Chemerin-like receptor 1 (Cmklr1) from Rattus norvegicus (Rat).